We begin with the raw amino-acid sequence, 322 residues long: Transaldolase (322 aa).

K132 serves as the catalytic Schiff-base intermediate with substrate. A phosphoserine mark is found at S268 and S269.

The protein belongs to the transaldolase family. Type 1 subfamily. As to quaternary structure, homodimer.

The enzyme catalyses D-sedoheptulose 7-phosphate + D-glyceraldehyde 3-phosphate = D-erythrose 4-phosphate + beta-D-fructose 6-phosphate. It functions in the pathway carbohydrate degradation; pentose phosphate pathway; D-glyceraldehyde 3-phosphate and beta-D-fructose 6-phosphate from D-ribose 5-phosphate and D-xylulose 5-phosphate (non-oxidative stage): step 2/3. Transaldolase is important for the balance of metabolites in the pentose-phosphate pathway. The sequence is that of Transaldolase (tal1) from Schizosaccharomyces pombe (strain 972 / ATCC 24843) (Fission yeast).